We begin with the raw amino-acid sequence, 449 residues long: MLLRLIVLLIFMSPVVFATLWFSDNVGSVQVEWLGWHVDSNMPVLLAVILVVFLIFSALSRLSALVADLPSKLGKSRQARGLEKGMSALLAALDAAESGDVGEGRRFAAEAARLLNNPGLAARLDRLLPRPPAQPVAPTRLEAAKGRLFARKPGPPPPPTPVVDKIQPVVVEKLAAAPAGPSREDLEAFSAKIRAGEWGAAQAWIGEAVLAGRLTPLVAARWRSVALEGQALEASPGDPARPLRLAREAMAADQTFLPPALHVIRAEVSEGRKAEAETLLASVWPHVPARVLLDACAPLWRDEDQDACLKRLEALAAIAPHHPDGHLAAGEAAFAVQKWGVARRHIMAALKIAPDALGCRLMAEIEEREPGGSARSAEIWRRREHEASLSPAWVCGACARVVEAWAACCPSCAGVATIEWTRSVKAEEALLPPATTASSMETPRLFRST.

The first 18 residues, 1–18, serve as a signal peptide directing secretion; that stretch reads MLLRLIVLLIFMSPVVFA. Residues 40-60 traverse the membrane as a helical segment; the sequence is SNMPVLLAVILVVFLIFSALS. One copy of the TPR repeat lies at 323-356; sequence PDGHLAAGEAAFAVQKWGVARRHIMAALKIAPDA.

It localises to the magnetosome membrane. In terms of biological role, overexpression in wild-type cells increases the number of cells with double magnetosome chains significantly. The 4 genes of this operon collectively influence magnetosome size and number. The polypeptide is Probable magnetosome protein Mms48 (Magnetospirillum gryphiswaldense (strain DSM 6361 / JCM 21280 / NBRC 15271 / MSR-1)).